A 76-amino-acid polypeptide reads, in one-letter code: Exodeoxyribonuclease 7 small subunit (76 aa).

The protein belongs to the XseB family. In terms of assembly, heterooligomer composed of large and small subunits.

The protein localises to the cytoplasm. The enzyme catalyses Exonucleolytic cleavage in either 5'- to 3'- or 3'- to 5'-direction to yield nucleoside 5'-phosphates.. In terms of biological role, bidirectionally degrades single-stranded DNA into large acid-insoluble oligonucleotides, which are then degraded further into small acid-soluble oligonucleotides. In Staphylococcus aureus (strain Mu3 / ATCC 700698), this protein is Exodeoxyribonuclease 7 small subunit.